A 121-amino-acid polypeptide reads, in one-letter code: Large ribosomal subunit protein uL14 (121 aa).

It belongs to the universal ribosomal protein uL14 family. As to quaternary structure, part of the 50S ribosomal subunit. Forms a cluster with proteins L3 and L19. In the 70S ribosome, L14 and L19 interact and together make contacts with the 16S rRNA in bridges B5 and B8.

In terms of biological role, binds to 23S rRNA. Forms part of two intersubunit bridges in the 70S ribosome. The polypeptide is Large ribosomal subunit protein uL14 (Prochlorococcus marinus (strain MIT 9515)).